Consider the following 194-residue polypeptide: Ion-translocating oxidoreductase complex subunit A (194 aa).

6 consecutive transmembrane segments (helical) span residues 1 to 21 (MVMH…FILV), 48 to 68 (CVIV…LIPF), 73 to 93 (LCTM…EIIV), 103 to 123 (LLGI…IPLM), 135 to 155 (VLYG…FSSI), and 172 to 192 (PIAL…DGLI).

Belongs to the NqrDE/RnfAE family. As to quaternary structure, the complex is composed of six subunits: RnfA, RnfB, RnfC, RnfD, RnfE and RnfG.

The protein resides in the cell inner membrane. Part of a membrane-bound complex that couples electron transfer with translocation of ions across the membrane. This chain is Ion-translocating oxidoreductase complex subunit A, found in Buchnera aphidicola subsp. Baizongia pistaciae (strain Bp).